Reading from the N-terminus, the 100-residue chain is Large ribosomal subunit protein uL23 (100 aa).

The protein belongs to the universal ribosomal protein uL23 family. As to quaternary structure, part of the 50S ribosomal subunit. Contacts protein L29, and trigger factor when it is bound to the ribosome.

One of the early assembly proteins it binds 23S rRNA. One of the proteins that surrounds the polypeptide exit tunnel on the outside of the ribosome. Forms the main docking site for trigger factor binding to the ribosome. The chain is Large ribosomal subunit protein uL23 from Mycobacterium marinum (strain ATCC BAA-535 / M).